We begin with the raw amino-acid sequence, 298 residues long: Cyanophycinase (298 aa).

Active-site charge relay system residues include serine 155, glutamate 173, and histidine 197.

It belongs to the peptidase S51 family.

The enzyme catalyses [L-4-(L-arginin-2-N-yl)aspartate](n) + H2O = [L-4-(L-arginin-2-N-yl)aspartate](n-1) + L-4-(L-arginin-2-N-yl)aspartate. Exopeptidase that catalyzes the hydrolytic cleavage of multi-L-arginyl-poly-L-aspartic acid (cyanophycin; a water-insoluble reserve polymer) into aspartate-arginine dipeptides. This Trichormus variabilis (strain ATCC 29413 / PCC 7937) (Anabaena variabilis) protein is Cyanophycinase (cphB).